The chain runs to 278 residues: Anamorsin homolog (278 aa).

The interval 1–147 is N-terminal SAM-like domain; that stretch reads MESVSHLVSN…EIGSSAALPF (147 aa). A linker region spans residues 147-191; the sequence is FANKISLGGNSKMETAKMWTLSSQDFVDDDIDIIDENTLIEEDDF. Residues cysteine 204, cysteine 214, cysteine 217, and cysteine 219 each coordinate [2Fe-2S] cluster. Residues 204 to 219 are fe-S binding site A; sequence CDSAKKKRKACKNCSC. Cysteine 239, cysteine 242, cysteine 250, and cysteine 253 together coordinate [4Fe-4S] cluster. Short sequence motifs (cx2C motif) lie at residues 239-242 and 250-253; these read CGSC and CSSC. The interval 239 to 253 is fe-S binding site B; it reads CGSCYLGDAFRCSSC.

It belongs to the anamorsin family. As to quaternary structure, monomer. The cofactor is [2Fe-2S] cluster. Requires [4Fe-4S] cluster as cofactor.

Its subcellular location is the cytoplasm. The protein resides in the mitochondrion intermembrane space. Its function is as follows. Component of the cytosolic iron-sulfur (Fe-S) protein assembly (CIA) machinery. Required for the maturation of extramitochondrial Fe-S proteins. Part of an electron transfer chain functioning in an early step of cytosolic Fe-S biogenesis, facilitating the de novo assembly of a [4Fe-4S] cluster on the cytosolic Fe-S scaffold complex. Electrons are transferred from NADPH via a FAD- and FMN-containing diflavin oxidoreductase. Together with the diflavin oxidoreductase, also required for the assembly of the diferric tyrosyl radical cofactor of ribonucleotide reductase (RNR), probably by providing electrons for reduction during radical cofactor maturation in the catalytic small subunit. This is Anamorsin homolog from Trichoplax adhaerens (Trichoplax reptans).